Consider the following 487-residue polypeptide: Glutamyl-tRNA(Gln) amidotransferase subunit A (487 aa).

Active-site charge relay system residues include lysine 79 and serine 154. Residue serine 178 is the Acyl-ester intermediate of the active site.

This sequence belongs to the amidase family. GatA subfamily. In terms of assembly, heterotrimer of A, B and C subunits.

The enzyme catalyses L-glutamyl-tRNA(Gln) + L-glutamine + ATP + H2O = L-glutaminyl-tRNA(Gln) + L-glutamate + ADP + phosphate + H(+). Allows the formation of correctly charged Gln-tRNA(Gln) through the transamidation of misacylated Glu-tRNA(Gln) in organisms which lack glutaminyl-tRNA synthetase. The reaction takes place in the presence of glutamine and ATP through an activated gamma-phospho-Glu-tRNA(Gln). The chain is Glutamyl-tRNA(Gln) amidotransferase subunit A from Roseiflexus sp. (strain RS-1).